The following is a 257-amino-acid chain: Diphthine synthase (257 aa).

Residues Ile11, Asp89, Ile92, 117–118 (SV), Leu169, Leu210, and His235 contribute to the S-adenosyl-L-methionine site.

This sequence belongs to the diphthine synthase family. Homodimer.

It catalyses the reaction 2-[(3S)-amino-3-carboxypropyl]-L-histidyl-[translation elongation factor 2] + 3 S-adenosyl-L-methionine = diphthine-[translation elongation factor 2] + 3 S-adenosyl-L-homocysteine + 3 H(+). The protein operates within protein modification; peptidyl-diphthamide biosynthesis. S-adenosyl-L-methionine-dependent methyltransferase that catalyzes the trimethylation of the amino group of the modified target histidine residue in translation elongation factor 2 (EF-2), to form an intermediate called diphthine. The three successive methylation reactions represent the second step of diphthamide biosynthesis. This Saccharolobus solfataricus (strain ATCC 35092 / DSM 1617 / JCM 11322 / P2) (Sulfolobus solfataricus) protein is Diphthine synthase.